A 704-amino-acid polypeptide reads, in one-letter code: Elongation factor G (704 aa).

Residues E8–N290 form the tr-type G domain. GTP-binding positions include A17–T24, D88–H92, and N142–D145.

It belongs to the TRAFAC class translation factor GTPase superfamily. Classic translation factor GTPase family. EF-G/EF-2 subfamily.

The protein localises to the cytoplasm. Catalyzes the GTP-dependent ribosomal translocation step during translation elongation. During this step, the ribosome changes from the pre-translocational (PRE) to the post-translocational (POST) state as the newly formed A-site-bound peptidyl-tRNA and P-site-bound deacylated tRNA move to the P and E sites, respectively. Catalyzes the coordinated movement of the two tRNA molecules, the mRNA and conformational changes in the ribosome. The chain is Elongation factor G from Francisella tularensis subsp. mediasiatica (strain FSC147).